The sequence spans 239 residues: Lactate utilization protein A 1 (239 aa).

Belongs to the LutA/YkgE family.

Is involved in L-lactate degradation and allows cells to grow with lactate as the sole carbon source. The polypeptide is Lactate utilization protein A 1 (Bacillus anthracis (strain A0248)).